We begin with the raw amino-acid sequence, 226 residues long: UPF0319 protein YPO1442/y2728/YP_1333 (226 aa).

Residues 1–20 form the signal peptide; the sequence is MKLGLVAGMLAVCFSFSSVA.

This sequence belongs to the UPF0319 family.

The chain is UPF0319 protein YPO1442/y2728/YP_1333 from Yersinia pestis.